The sequence spans 1439 residues: CLIP-associated protein (1439 aa).

M1 is subject to N-acetylmethionine. HEAT repeat units follow at residues M1 to K32, P36 to E74, K77 to P115, and L154 to S192. Residues K238–D264 are disordered. HEAT repeat units follow at residues K281–T319, R325–G363, E366–N401, C402–P439, and R486–F525. 3 disordered regions span residues E503–T539, S611–L660, and S672–A715. The segment covering Q522–S532 has biased composition (polar residues). A compositionally biased stretch (low complexity) spans A632–S649. A compositionally biased stretch (polar residues) spans S672–T696. Positions R699–A715 are enriched in basic and acidic residues. 6 HEAT repeats span residues R809–V830, I831–K869, E872–V910, S912–I950, S954–S992, and G994–S1031. The segment covering D1074–T1088 has biased composition (polar residues). The interval D1074–G1101 is disordered. HEAT repeat units lie at residues T1201–A1239, T1246–D1284, E1287–P1325, R1327–Q1360, M1364–K1402, and L1405–T1439.

The protein belongs to the CLASP family. As to expression, expressed at a low level in all tissues, mostly in young developing tissues.

It is found in the cytoplasm. It localises to the cytoskeleton. Its subcellular location is the spindle. The protein localises to the phragmoplast. The protein resides in the cell cortex. In terms of biological role, cortical microtubule plus-end tracking protein required for cell morphogenesis and cell division. Promotes the stabilization of dynamic microtubules during mitosis. Regulates microtubule-cortex attachment, thereby contributing to self-organization of cortical microtubules and subsequent cell shape. The protein is CLIP-associated protein (CLASP) of Arabidopsis thaliana (Mouse-ear cress).